Reading from the N-terminus, the 501-residue chain is Aspartate--tRNA ligase, cytoplasmic (501 aa).

At Thr52 the chain carries Phosphothreonine. Position 74 is an N6-acetyllysine (Lys74). An L-aspartate-binding site is contributed by Glu229. Ser249 is subject to Phosphoserine. The aspartate stretch occupies residues 251 to 254 (QLYK). Arg273 contacts L-aspartate. Residues 273 to 275 (RAE) and 281 to 283 (RHL) each bind ATP. Lys374 carries the post-translational modification N6-acetyllysine. The segment at 411 to 415 (KQSNS) is binding site for the 3'-end of tRNA. Residue Glu424 participates in ATP binding. L-aspartate is bound by residues Ser427 and Arg431. 472-475 (GLER) contributes to the ATP binding site. A Phosphothreonine; by PKA modification is found at Thr500.

Belongs to the class-II aminoacyl-tRNA synthetase family. Type 2 subfamily. In terms of assembly, homodimer. Part of a multisubunit complex that groups tRNA ligases for Arg (RARS1), Asp (DARS1), Gln (QARS1), Ile (IARS1), Leu (LARS1), Lys (KARS1), Met (MARS1) the bifunctional ligase for Glu and Pro (EPRS1) and the auxiliary subunits AIMP1/p43, AIMP2/p38 and EEF1E1/p18.

The protein resides in the cytoplasm. The catalysed reaction is tRNA(Asp) + L-aspartate + ATP = L-aspartyl-tRNA(Asp) + AMP + diphosphate. In terms of biological role, catalyzes the specific attachment of an amino acid to its cognate tRNA in a 2 step reaction: the amino acid (AA) is first activated by ATP to form AA-AMP and then transferred to the acceptor end of the tRNA. In Pongo abelii (Sumatran orangutan), this protein is Aspartate--tRNA ligase, cytoplasmic (DARS1).